The primary structure comprises 229 residues: Peptidase E (229 aa).

Catalysis depends on charge relay system residues Ser120, Asp135, and His157.

This sequence belongs to the peptidase S51 family.

Its subcellular location is the cytoplasm. It catalyses the reaction Dipeptidase E catalyzes the hydrolysis of dipeptides Asp-|-Xaa. It does not act on peptides with N-terminal Glu, Asn or Gln, nor does it cleave isoaspartyl peptides.. In terms of biological role, hydrolyzes dipeptides containing N-terminal aspartate residues. May play a role in allowing the cell to use peptide aspartate to spare carbon otherwise required for the synthesis of the aspartate family of amino acids. The sequence is that of Peptidase E from Salmonella arizonae (strain ATCC BAA-731 / CDC346-86 / RSK2980).